The chain runs to 297 residues: tRNA dimethylallyltransferase (297 aa).

10–17 serves as a coordination point for ATP; it reads GITASGKS. 12-17 lines the substrate pocket; sequence TASGKS. The segment at 36 to 39 is interaction with substrate tRNA; the sequence is DSKQ.

The protein belongs to the IPP transferase family. In terms of assembly, monomer. Requires Mg(2+) as cofactor.

The enzyme catalyses adenosine(37) in tRNA + dimethylallyl diphosphate = N(6)-dimethylallyladenosine(37) in tRNA + diphosphate. Its function is as follows. Catalyzes the transfer of a dimethylallyl group onto the adenine at position 37 in tRNAs that read codons beginning with uridine, leading to the formation of N6-(dimethylallyl)adenosine (i(6)A). In Wolbachia pipientis wMel, this protein is tRNA dimethylallyltransferase.